Here is a 96-residue protein sequence, read N- to C-terminus: Dynein light chain roadblock-type 2 (96 aa).

The residue at position 2 (alanine 2) is an N-acetylalanine.

It belongs to the GAMAD family. As to quaternary structure, homodimer. The cytoplasmic dynein 1 complex consists of two catalytic heavy chains (HCs) and a number of non-catalytic subunits presented by intermediate chains (ICs), light intermediate chains (LICs) and light chains (LCs); the composition seems to vary in respect to the IC, LIC and LC composition. The heavy chain homodimer serves as a scaffold for the probable homodimeric assembly of the respective non-catalytic subunits. The ICs and LICs bind directly to the HC dimer and the LCs assemble on the IC dimer. Interacts with DYNC1I1 and DYNC1I2. Self-associates. Interacts with DYNLRB1. In terms of tissue distribution, high expression in heart, brain, placenta, skeletal muscle, prostate and small intestine; moderate in kidney, pancreas, spleen, testis, ovary and colon; low in lung, liver, thymus and leukocyte.

It is found in the cytoplasm. It localises to the cytoskeleton. In terms of biological role, acts as one of several non-catalytic accessory components of the cytoplasmic dynein 1 complex that are thought to be involved in linking dynein to cargos and to adapter proteins that regulate dynein function. Cytoplasmic dynein 1 acts as a motor for the intracellular retrograde motility of vesicles and organelles along microtubules. The polypeptide is Dynein light chain roadblock-type 2 (DYNLRB2) (Homo sapiens (Human)).